The primary structure comprises 171 residues: Early E1A protein (171 aa).

Residues 40–48 are interaction with RB1 in competition with E2F1; it reads PTLHDLFDV. Residues 67 to 96 are disordered; it reads DTDSSASTEGDSGFSPLSTPPVSPIPPHPT. The segment covering 84–96 has biased composition (pro residues); the sequence is STPPVSPIPPHPT. Residues 106 to 110 carry the LXCXE motif, interaction with host RB1 motif; the sequence is LLCLE. The segment at 145 to 163 is a zinc-finger region; that stretch reads CLRCAFYQEQDDNALCGLC. Residues 166–171 carry the Nuclear localization signal motif; sequence KGPCRR.

Belongs to the adenoviridae E1A protein family. As to quaternary structure, interacts with host UBE2I; this interaction interferes with polySUMOylation. Interacts with host RB1; this interaction induces the aberrant dissociation of RB1-E2F1 complex thereby disrupting the activity of RB1 and activating E2F1-regulated genes. Interacts with host ATF7; the interaction enhances ATF7-mediated viral transactivation activity which requires the zinc binding domains of both proteins. Isoform early E1A 32 kDa protein and isoform early E1A 26 kDa protein interact (via N-terminus) with CUL1 and E3 ubiquitin ligase RBX1; these interactions inhibit RBX1-CUL1-dependent elongation reaction of ubiquitin chains and attenuate ubiquitination of SCF(FBXW7) target proteins. Interacts (via PXLXP motif) with host ZMYND11/BS69 (via MYND-type zinc finger); this interaction inhibits E1A mediated transactivation. Interacts with host EP300; this interaction stimulates the acetylation of RB1 by recruiting EP300 and RB1 into a multimeric-protein complex. Interacts with host CTBP1 and CTBP2; this interaction seems to potentiate viral replication. Interacts with host DCAF7. Interacts with host DYRK1A. Interacts with host KPNA4; this interaction allows E1A import into the host nucleus. Interacts with host EP400; this interaction stabilizes MYC. Interacts with host TBP protein; this interaction probably disrupts the TBP-TATA complex.

The protein localises to the host nucleus. Plays a role in viral genome replication by driving entry of quiescent cells into the cell cycle. Stimulation of progression from G1 to S phase allows the virus to efficiently use the cellular DNA replicating machinery to achieve viral genome replication. E1A protein has both transforming and trans-activating activities. Induces the disassembly of the E2F1 transcription factor from RB1 by direct competition for the same binding site on RB1, with subsequent transcriptional activation of E2F1-regulated S-phase genes and of the E2 region of the adenoviral genome. Release of E2F1 leads to the ARF-mediated inhibition of MDM2 and causes TP53/p53 to accumulate because it is not targeted for degradation by MDM2-mediated ubiquitination anymore. This increase in TP53, in turn, would arrest the cell proliferation and direct its death but this effect is counteracted by the viral protein E1B-55K. Inactivation of the ability of RB1 to arrest the cell cycle is critical for cellular transformation, uncontrolled cellular growth and proliferation induced by viral infection. Interaction with RBX1 and CUL1 inhibits ubiquitination of the proteins targeted by SCF(FBXW7) ubiquitin ligase complex, and may be linked to unregulated host cell proliferation. The tumorigenesis-restraining activity of E1A may be related to the disruption of the host CtBP-CtIP complex through the CtBP binding motif. The chain is Early E1A protein from Canis lupus familiaris (Dog).